The sequence spans 444 residues: MSNTILQNLPLGQKVGIAFSGGLDTSAALLWMRQKGAVPYAYTANLGQPDEDDYNAIPKKAMAYGAENARLIDCRKQLAQEGIAAIQCGAFHISTGGVTYFNTTPLGRAVTGTMLVAAMKEDDVNIWGDGSTFKGNDIERFYRYGLLTNPNLKIYKPWLDDQFIDELGGRFEMSQFLIANGFDYKMSVEKAYSTDSNMLGATHEAKDLEDLSTGIKIVKPIMGVAFWDESVEIKPEVVTVRFEEGVPVELNGKRFDDVVELFMEANRIGGRHGLGMSDQIENRIIEAKSRGIYEAPGMALFHIAYERLVTGIHNEDTIEQYRINGLRLGRLLYQGRWFDPQALMLRESSQRWVAKAITGEVKLELRRGNDYSILDTVSPNLTYEAERLSMEKVEDAPFDPIDRIGQLTMRNLDVTDTRNKLGIYSEAGLLTAGKDAVVPQLGSK.

ATP-binding positions include 18–26 (AFSGGLDTS) and A44. Y100 serves as a coordination point for L-citrulline. 2 residues coordinate ATP: G130 and T132. The L-aspartate site is built by T132, N136, and D137. Residue N136 participates in L-citrulline binding. D137 serves as a coordination point for ATP. L-citrulline contacts are provided by R140 and S193. Residue D195 participates in ATP binding. Positions 202, 204, and 281 each coordinate L-citrulline.

It belongs to the argininosuccinate synthase family. Type 2 subfamily. Homotetramer.

It localises to the cytoplasm. It carries out the reaction L-citrulline + L-aspartate + ATP = 2-(N(omega)-L-arginino)succinate + AMP + diphosphate + H(+). It functions in the pathway amino-acid biosynthesis; L-arginine biosynthesis; L-arginine from L-ornithine and carbamoyl phosphate: step 2/3. The protein is Argininosuccinate synthase of Mannheimia succiniciproducens (strain KCTC 0769BP / MBEL55E).